Here is a 62-residue protein sequence, read N- to C-terminus: Large ribosomal subunit protein uL30 (62 aa).

The protein belongs to the universal ribosomal protein uL30 family. Part of the 50S ribosomal subunit.

This is Large ribosomal subunit protein uL30 from Ruegeria pomeroyi (strain ATCC 700808 / DSM 15171 / DSS-3) (Silicibacter pomeroyi).